The following is a 352-amino-acid chain: PDZ and LIM domain protein 2 (352 aa).

The PDZ domain maps to 1–84; it reads MALTVDVAGP…PLRLQLDRSQ (84 aa). Disordered regions lie at residues 67 to 97 and 111 to 149; these read SKIR…DSSL and YTES…TGEA. Polar residues predominate over residues 81–95; it reads DRSQATSPGQTNGDS. The segment covering 111 to 135 has biased composition (low complexity); the sequence is YTESQSSLRSSYSSPTSLSPRAGSP. Serine 124 is subject to Phosphoserine. Position 126 is a phosphothreonine (threonine 126). Residues serine 127, serine 129, serine 134, serine 137, serine 143, serine 161, serine 197, serine 203, serine 213, and serine 266 each carry the phosphoserine modification. Residues 170 to 213 form a disordered region; the sequence is LSYSGRPGSRQAGLGRAGDSAVLVLPPSPGPRSSRPSMDSEGGS. Positions 284-344 constitute an LIM zinc-binding domain; it reads HTCEKCSTSI…EKHARQRYSA (61 aa).

Interacts with alpha-actinins ACTN1 and ACTN4, FLNA and MYH9. Interacts (via LIM zinc-binding domain) with MKRN2.

The protein resides in the cytoplasm. It is found in the nucleus. It localises to the cytoskeleton. In terms of biological role, probable adapter protein located at the actin cytoskeleton that promotes cell attachment. Necessary for the migratory capacity of epithelial cells. Overexpression enhances cell adhesion to collagen and fibronectin and suppresses anchorage independent growth. May contribute to tumor cell migratory capacity. The protein is PDZ and LIM domain protein 2 (PDLIM2) of Homo sapiens (Human).